Reading from the N-terminus, the 273-residue chain is Phosphatidylglycerol--prolipoprotein diacylglyceryl transferase (273 aa).

A run of 7 helical transmembrane segments spans residues 21–41, 60–80, 95–115, 124–144, 176–196, 203–223, and 237–257; these read VSIR…LWLA, LLFA…VIFY, VWTG…AMFW, FFGV…MGRM, SQLY…NWFI, GSVS…VEFV, and ISMG…MMVW. Arg143 is a binding site for a 1,2-diacyl-sn-glycero-3-phospho-(1'-sn-glycerol).

It belongs to the Lgt family.

Its subcellular location is the cell inner membrane. It catalyses the reaction L-cysteinyl-[prolipoprotein] + a 1,2-diacyl-sn-glycero-3-phospho-(1'-sn-glycerol) = an S-1,2-diacyl-sn-glyceryl-L-cysteinyl-[prolipoprotein] + sn-glycerol 1-phosphate + H(+). It functions in the pathway protein modification; lipoprotein biosynthesis (diacylglyceryl transfer). In terms of biological role, catalyzes the transfer of the diacylglyceryl group from phosphatidylglycerol to the sulfhydryl group of the N-terminal cysteine of a prolipoprotein, the first step in the formation of mature lipoproteins. In Vibrio parahaemolyticus serotype O3:K6 (strain RIMD 2210633), this protein is Phosphatidylglycerol--prolipoprotein diacylglyceryl transferase.